We begin with the raw amino-acid sequence, 98 residues long: DNA-binding protein Fis (98 aa).

The H-T-H motif DNA-binding region spans 74–93; sequence QTRAATMLGINRGTLRKKLK.

Belongs to the transcriptional regulatory Fis family. As to quaternary structure, homodimer.

Functionally, activates ribosomal RNA transcription. Plays a direct role in upstream activation of rRNA promoters. The chain is DNA-binding protein Fis from Glaesserella parasuis serovar 5 (strain SH0165) (Haemophilus parasuis).